A 332-amino-acid polypeptide reads, in one-letter code: Abscisic acid-inducible protein kinase (332 aa).

Residues 1–8 (GSGNFGVA) and Lys23 contribute to the ATP site. The 250-residue stretch at 1–250 (GSGNFGVAKL…IPEIKNHPWF (250 aa)) folds into the Protein kinase domain. Asp113 (proton acceptor) is an active-site residue.

Belongs to the protein kinase superfamily. Ser/Thr protein kinase family. Autophosphorylated.

The catalysed reaction is L-seryl-[protein] + ATP = O-phospho-L-seryl-[protein] + ADP + H(+). The enzyme catalyses L-threonyl-[protein] + ATP = O-phospho-L-threonyl-[protein] + ADP + H(+). In terms of biological role, involved in water-stress responses. This chain is Abscisic acid-inducible protein kinase, found in Triticum aestivum (Wheat).